Reading from the N-terminus, the 745-residue chain is Kinesin-like protein KIN-14M (745 aa).

Positions 1–31 (MVGEMTNNGRIRPSFPVKDLTSNEGSEYGGP) are disordered. The tract at residues 1–35 (MVGEMTNNGRIRPSFPVKDLTSNEGSEYGGPVEFT) is globular. Microtubule-binding stretches follow at residues 65–77 (YVKR…RWFQ) and 198–745 (SLQL…LSLG). 2 coiled-coil regions span residues 76-223 (FQEL…GEKE) and 259-389 (KDEL…GNIR). The 338-residue stretch at 387-724 (NIRVFCRVRP…LRFAARVNAC (338 aa)) folds into the Kinesin motor domain. 472–479 (GQTGSGKT) provides a ligand contact to ATP.

This sequence belongs to the TRAFAC class myosin-kinesin ATPase superfamily. Kinesin family. KIN-14 subfamily. Bind to microtubules in an ATP-insensitive manner (in vitro). Homodimer and heterodimer with KIN14N/KATC (in vitro).

The protein localises to the cytoplasm. It localises to the cytoskeleton. The protein is Kinesin-like protein KIN-14M of Arabidopsis thaliana (Mouse-ear cress).